Here is a 470-residue protein sequence, read N- to C-terminus: Fumarate hydratase class II (470 aa).

Substrate contacts are provided by residues 99–101 (SGT), 129–132 (HPND), 139–141 (SSN), and Thr-187. His-188 functions as the Proton donor/acceptor in the catalytic mechanism. Ser-318 is an active-site residue. Substrate-binding positions include Ser-319 and 324–326 (KIN).

It belongs to the class-II fumarase/aspartase family. Fumarase subfamily. As to quaternary structure, homotetramer.

It localises to the cytoplasm. The enzyme catalyses (S)-malate = fumarate + H2O. It functions in the pathway carbohydrate metabolism; tricarboxylic acid cycle; (S)-malate from fumarate: step 1/1. In terms of biological role, involved in the TCA cycle. Catalyzes the stereospecific interconversion of fumarate to L-malate. The protein is Fumarate hydratase class II of Halobacterium salinarum (strain ATCC 700922 / JCM 11081 / NRC-1) (Halobacterium halobium).